We begin with the raw amino-acid sequence, 223 residues long: Transcription factor bHLH75 (223 aa).

The interval 58–100 (FPNLLHGNTRRKGNKEESGSKRRRKRSEEEEAMNGDETQKPKD) is disordered. The bHLH domain maps to 110–160 (QATDSHSLAERVRREKINERLKCLQDLVPGCYKAMGMAVMLDVIIDYVRSL).

Homodimer. Expressed in leaves, stems, and flowers.

The protein localises to the nucleus. This Arabidopsis thaliana (Mouse-ear cress) protein is Transcription factor bHLH75 (BHLH75).